The sequence spans 157 residues: Endoribonuclease YbeY (157 aa).

Zn(2+) contacts are provided by H115, H119, and H125.

The protein belongs to the endoribonuclease YbeY family. Zn(2+) is required as a cofactor.

The protein resides in the cytoplasm. Its function is as follows. Single strand-specific metallo-endoribonuclease involved in late-stage 70S ribosome quality control and in maturation of the 3' terminus of the 16S rRNA. In Micrococcus luteus (strain ATCC 4698 / DSM 20030 / JCM 1464 / CCM 169 / CCUG 5858 / IAM 1056 / NBRC 3333 / NCIMB 9278 / NCTC 2665 / VKM Ac-2230) (Micrococcus lysodeikticus), this protein is Endoribonuclease YbeY.